Consider the following 492-residue polypeptide: Transmembrane protein 39B (492 aa).

The tract at residues 1 to 54 (MGGRRGPNRTSYCRNPLCEPGSSGGSSGSHTSSASVTSVRSRTRSSSGTGLSSP) is disordered. Asn-8 carries N-linked (GlcNAc...) asparagine glycosylation. The segment covering 28-53 (GSHTSSASVTSVRSRTRSSSGTGLSS) has biased composition (low complexity). The next 8 membrane-spanning stretches (helical) occupy residues 77–97 (SILF…VHYI), 115–135 (TSLN…IVLG), 153–175 (SLFR…GWSL), 185–205 (TYSF…IPFL), 288–308 (EVLV…VWFV), 322–342 (LFLL…LPAS), 421–441 (ILNI…YSLM), and 447–467 (HQTI…FKLL).

It belongs to the TMEM39 family.

Its subcellular location is the endoplasmic reticulum membrane. In terms of biological role, may protect the cells against DNA damage caused by exposure to the cold-warming stress and facilitates tissue damage repair during the recovery phase. This Homo sapiens (Human) protein is Transmembrane protein 39B.